The chain runs to 528 residues: GTPase Der (528 aa).

Acidic residues-rich tracts occupy residues 1 to 12 (MDVEGAFADEEE) and 30 to 62 (GYDD…PDFG). Positions 1–62 (MDVEGAFADE…EDDFAAPDFG (62 aa)) are disordered. EngA-type G domains are found at residues 90-253 (CTVA…PEEP) and 263-436 (RRVA…ENWD). GTP contacts are provided by residues 96–103 (GRPNVGKS), 143–147 (DTGGW), 205–208 (NKFD), 269–276 (GKPNVGKS), 316–320 (DTAGL), and 381–384 (NKWD). A KH-like domain is found at 437–519 (RRVSTGQLNN…PIRIAVRVRE (83 aa)).

The protein belongs to the TRAFAC class TrmE-Era-EngA-EngB-Septin-like GTPase superfamily. EngA (Der) GTPase family. In terms of assembly, associates with the 50S ribosomal subunit.

Functionally, GTPase that plays an essential role in the late steps of ribosome biogenesis. The chain is GTPase Der from Corynebacterium efficiens (strain DSM 44549 / YS-314 / AJ 12310 / JCM 11189 / NBRC 100395).